Reading from the N-terminus, the 652-residue chain is DNA ligase (652 aa).

NAD(+) contacts are provided by residues 29 to 33, 78 to 79, and glutamate 107; these read DSDYD and SL. Lysine 109 (N6-AMP-lysine intermediate) is an active-site residue. 4 residues coordinate NAD(+): arginine 130, glutamate 164, lysine 278, and lysine 302. Cysteine 395, cysteine 398, cysteine 413, and cysteine 418 together coordinate Zn(2+). One can recognise a BRCT domain in the interval 577–652; it reads NSDAALFGLT…IEDEDWLRQL (76 aa).

This sequence belongs to the NAD-dependent DNA ligase family. LigA subfamily. Requires Mg(2+) as cofactor. The cofactor is Mn(2+).

It catalyses the reaction NAD(+) + (deoxyribonucleotide)n-3'-hydroxyl + 5'-phospho-(deoxyribonucleotide)m = (deoxyribonucleotide)n+m + AMP + beta-nicotinamide D-nucleotide.. Functionally, DNA ligase that catalyzes the formation of phosphodiester linkages between 5'-phosphoryl and 3'-hydroxyl groups in double-stranded DNA using NAD as a coenzyme and as the energy source for the reaction. It is essential for DNA replication and repair of damaged DNA. This is DNA ligase from Streptococcus pyogenes serotype M49 (strain NZ131).